The chain runs to 82 residues: Exodeoxyribonuclease 7 small subunit (82 aa).

This sequence belongs to the XseB family. As to quaternary structure, heterooligomer composed of large and small subunits.

It localises to the cytoplasm. It carries out the reaction Exonucleolytic cleavage in either 5'- to 3'- or 3'- to 5'-direction to yield nucleoside 5'-phosphates.. Its function is as follows. Bidirectionally degrades single-stranded DNA into large acid-insoluble oligonucleotides, which are then degraded further into small acid-soluble oligonucleotides. This chain is Exodeoxyribonuclease 7 small subunit, found in Coxiella burnetii (strain CbuG_Q212) (Coxiella burnetii (strain Q212)).